The chain runs to 928 residues: Chitin synthase 2 (928 aa).

Disordered regions lie at residues 1–45 (MAYN…EAYA) and 110–179 (AYYT…SPAP). Polar residues predominate over residues 17 to 28 (PSAQPQYDSRSP). Residues 130–140 (PSHDEPYRPDT) are compositionally biased toward basic and acidic residues. The next 9 membrane-spanning stretches (helical) occupy residues 472-492 (SAFG…YVAL), 570-589 (WLNG…YQLW), 613-633 (LFAW…TASL), 644-664 (TVLG…CFIL), 678-698 (MMMV…SIFL), 723-743 (FFGL…ASFL), 753-773 (CFLQ…IYAF), 854-874 (VTAW…IAGF), and 893-913 (VILW…CWFL).

Belongs to the chitin synthase family. Class I subfamily.

The protein resides in the cell membrane. It carries out the reaction [(1-&gt;4)-N-acetyl-beta-D-glucosaminyl](n) + UDP-N-acetyl-alpha-D-glucosamine = [(1-&gt;4)-N-acetyl-beta-D-glucosaminyl](n+1) + UDP + H(+). Its function is as follows. Polymerizes chitin, a structural polymer of the cell wall and septum, by transferring the sugar moiety of UDP-GlcNAc to the non-reducing end of the growing chitin polymer. CHS2 plays a synergistic role to CHS1 in normal yeast cell reproductive growth, even if this role is less predominant than for CHS1. With CHS3, plays an important role in virulence. In Exophiala dermatitidis (Black yeast-like fungus), this protein is Chitin synthase 2.